The sequence spans 400 residues: Acetate kinase (400 aa).

N10 lines the Mg(2+) pocket. K17 serves as a coordination point for ATP. R91 is a substrate binding site. Catalysis depends on D150, which acts as the Proton donor/acceptor. ATP is bound by residues 210–214 (HLGNG), 285–287 (DCR), and 333–337 (GIGEN). E387 is a Mg(2+) binding site.

It belongs to the acetokinase family. Homodimer. The cofactor is Mg(2+). Mn(2+) serves as cofactor.

The protein localises to the cytoplasm. The enzyme catalyses acetate + ATP = acetyl phosphate + ADP. It functions in the pathway metabolic intermediate biosynthesis; acetyl-CoA biosynthesis; acetyl-CoA from acetate: step 1/2. Functionally, catalyzes the formation of acetyl phosphate from acetate and ATP. Can also catalyze the reverse reaction. This Cronobacter sakazakii (strain ATCC BAA-894) (Enterobacter sakazakii) protein is Acetate kinase.